Consider the following 291-residue polypeptide: MITVRAPATSANLGSGFDVFGAALERPADILRIEKANRTTIRVTGVGSKYIPEDPEKNTVGAVAEALDAPAHIEIDKGVRPASGLGSSAASAAAAAVGLNELYDRGLSREELVPIAAEGEAVVSGAAHADNVAPSIMGGFTVAREDGVTQVDASIPLVACLPEIVVSTRDARGVVPEAAPMEAVVDVVGNAATLAVGMARDDPALVGRGMEDSIVTPERAELINGYETVRSAAENAGATGVTISGAGPTVIAACHRGDRTAIASAMLDAFSEAGVEARAYKTEIGRGAELF.

Residue 80–90 (RPASGLGSSAA) coordinates ATP.

The protein belongs to the GHMP kinase family. Homoserine kinase subfamily.

It is found in the cytoplasm. The catalysed reaction is L-homoserine + ATP = O-phospho-L-homoserine + ADP + H(+). Its pathway is amino-acid biosynthesis; L-threonine biosynthesis; L-threonine from L-aspartate: step 4/5. Functionally, catalyzes the ATP-dependent phosphorylation of L-homoserine to L-homoserine phosphate. This is Homoserine kinase from Natronomonas pharaonis (strain ATCC 35678 / DSM 2160 / CIP 103997 / JCM 8858 / NBRC 14720 / NCIMB 2260 / Gabara) (Halobacterium pharaonis).